Consider the following 207-residue polypeptide: Transcription factor DYT1 (207 aa).

Positions 1-38 (MGGGSRFQEPVRMSRRKQVTKEKEEDENFKSPNLEAER) are disordered. The region spanning 28-77 (NFKSPNLEAERRRREKLHCRLMALRSHVPIVTNMTKASIVEDAITYIGEL) is the bHLH domain.

In terms of assembly, homodimer. In terms of tissue distribution, mostly expressed in anthers, and, to a lower extent, in young inflorescences undergoing meiosis and siliques.

It localises to the nucleus. Functionally, transcription factor. Involved in the control of tapetum development. Required for male fertility and pollen differentiation, especially during callose deposition. The polypeptide is Transcription factor DYT1 (Arabidopsis thaliana (Mouse-ear cress)).